A 492-amino-acid chain; its full sequence is Serine/threonine protein phosphatase 2A 57 kDa regulatory subunit B' theta isoform (492 aa).

The segment at 1–63 (MWKQILSKLP…GFKEGNLKGN (63 aa)) is disordered. Residues 16-39 (KNHSSSSSSTSKSSDNGASKSGNS) show a composition bias toward low complexity. The Microbody targeting signal motif lies at 490-492 (SSL).

The protein belongs to the phosphatase 2A regulatory subunit B56 family. PP2A consists of a common heteromeric enzyme, composed of a catalytic subunit (subunits C), a constant regulatory subunit (subunit A), and a variety of regulatory subunits such as subunits B (the R2/B/PR55/B55, R3/B''/PR72/PR130/PR59 and R5/B'/B56 families). Interacts with BZR1. Interacts with PP2A2, PP2A5 and PP2AA2. As to expression, highly expressed in dry seeds. Expressed in roots, cotyledons, rosette leaves and flowers.

Its subcellular location is the cytoplasm. The protein localises to the cytosol. The protein resides in the peroxisome. In terms of biological role, the B regulatory subunit may modulate substrate selectivity and catalytic activity, and may also direct the localization of the catalytic enzyme to a particular subcellular compartment. Associates with the serine/threonine-protein phosphatase PP2A catalytic subunit C and regulatory subunit A to positively regulates beta-oxidation of fatty acids and protoauxins in peroxisomes by dephosphorylating peroxisomal beta-oxidation-related proteins. Required for the formation of the PP2A holoenzyme that negatively regulates brassinosteroid signaling by dephosphorylating and inactivating BRI1 in the cytoplasm. This Arabidopsis thaliana (Mouse-ear cress) protein is Serine/threonine protein phosphatase 2A 57 kDa regulatory subunit B' theta isoform (B'THETA).